The primary structure comprises 425 residues: Secernin-2 (425 aa).

Cysteine 12 is a catalytic residue. Threonine 52 carries the post-translational modification Phosphothreonine.

This sequence belongs to the peptidase C69 family. Secernin subfamily.

The chain is Secernin-2 (SCRN2) from Homo sapiens (Human).